A 115-amino-acid polypeptide reads, in one-letter code: Large ribosomal subunit protein bL20 (115 aa).

It belongs to the bacterial ribosomal protein bL20 family.

In terms of biological role, binds directly to 23S ribosomal RNA and is necessary for the in vitro assembly process of the 50S ribosomal subunit. It is not involved in the protein synthesizing functions of that subunit. The sequence is that of Large ribosomal subunit protein bL20 from Synechococcus sp. (strain WH7803).